Reading from the N-terminus, the 103-residue chain is Protein S100-A16 (103 aa).

An EF-hand 1; degenerate domain is found at 12–47 (VVVLVENFYKYVSKHSLVKNKISKSSFRKMLQKELN). Positions 54–89 (GNRKAADKLIQNLDANHDGRISFDEYWTLIGGITSP) constitute an EF-hand 2 domain. The Ca(2+) site is built by aspartate 67, asparagine 69, aspartate 71, arginine 73, and glutamate 78.

This sequence belongs to the S-100 family. As to quaternary structure, homodimer. Interacts with TP53.

The protein resides in the nucleus. It is found in the nucleolus. The protein localises to the cytoplasm. Calcium-binding protein. Binds one calcium ion per monomer. Can promote differentiation of adipocytes (in vitro). Overexpression in preadipocytes increases their proliferation, enhances adipogenesis and reduces insulin-stimulated glucose uptake. The polypeptide is Protein S100-A16 (S100A16) (Bos taurus (Bovine)).